The following is a 567-amino-acid chain: Potassium-transporting ATPase potassium-binding subunit (567 aa).

12 helical membrane passes run 5-25, 64-84, 136-156, 179-199, 254-274, 285-305, 328-350, 375-395, 421-441, 459-481, 486-506, and 529-549; these read GWLQILIYIGILLLLVKPLGG, TTYSISMLLFSLAGFLMLYFL, GFTVQNFVSAATGIALAIALI, LYVLLPACIVMTLVFVYLGVP, ISNLIQMLAIFAIGAALTNVF, WAILAAMGTLFIAGVIVTYWA, VRFGITMSSLFAVITTAASCGAV, IVGGVGAGFYGILMFVIIAIF, MLAVLCLPAGMLIFTAISVVL, ILYAYSSAAANNGSAFAGLSANT, ITLGVVMLIGRFLVIVPALAI, and LFVGLLVGTILIVGGLTFFPA.

Belongs to the KdpA family. The system is composed of three essential subunits: KdpA, KdpB and KdpC.

It is found in the cell inner membrane. Its function is as follows. Part of the high-affinity ATP-driven potassium transport (or Kdp) system, which catalyzes the hydrolysis of ATP coupled with the electrogenic transport of potassium into the cytoplasm. This subunit binds the periplasmic potassium ions and delivers the ions to the membrane domain of KdpB through an intramembrane tunnel. The protein is Potassium-transporting ATPase potassium-binding subunit of Rhizobium rhizogenes (strain K84 / ATCC BAA-868) (Agrobacterium radiobacter).